The following is a 1315-amino-acid chain: Chaoptin (1315 aa).

An N-terminal signal peptide occupies residues 1–29; it reads MGLEFFFKFGYAFLTITLMIMIWMSLARA. N77 is a glycosylation site (N-linked (GlcNAc...) (high mannose) asparagine; alternate). An N-linked (GlcNAc...) (paucimannose) asparagine; alternate glycan is attached at N77. LRR repeat units follow at residues 80-101, 103-124, 128-149, 152-173, 177-198, 201-222, 226-247, 250-271, and 279-300; these read KVFM…FLQS, GMYR…AFTG, SLWE…SLRH, KLRH…SFRG, SLQT…SFSG, ILET…VFVD, RLTR…ALGP, SLRT…ETYE, and NLDN…SFKY. Residue N267 is glycosylated (N-linked (GlcNAc...) (paucimannose) asparagine; alternate). An N-linked (GlcNAc...) (complex) asparagine; alternate glycan is attached at N267. A glycan (N-linked (GlcNAc...) (high mannose) asparagine; alternate) is linked at N305. The N-linked (GlcNAc...) (paucimannose) asparagine; alternate glycan is linked to N305. LRR repeat units lie at residues 326-347, 351-372, 375-396, 401-424, 477-498, 527-548, 551-572, 577-598, 601-622, 625-646, 649-670, 676-696, 708-729, 733-754, 757-778, 781-802, 805-826, 828-849, 854-875, 879-900, 903-924, 928-948, 949-970, 973-994, 996-1017, 1021-1044, and 1045-1066; these read RIRE…AFDS, SLQI…LFNN, VLRV…ETFN, TLLK…RNMT, GLKR…AFHE, SLQE…SFHF, NLRL…TFQG, KLEE…TFFD, ALRK…AFMN, ELEY…SFQN, KLEI…YFDQ, NLNV…SSWS, NIKI…YFRP, SLTH…VFGN, HLQW…AFKN, QLQL…IFKP, GLRI…LFYN, GMEK…SLSS, TLCE…DLSN, SLRY…VFAT, KLAV…SFMG, SLIK…IRLK, YLRE…LAHN, NLRM…TQAL, HLRR…SFDG, DLEM…DSLP, and HLRS…PHLL. N-linked (GlcNAc...) (high mannose) asparagine glycosylation is present at N361. An N-linked (GlcNAc...) asparagine glycan is attached at N422. Residue N680 is glycosylated (N-linked (GlcNAc...) (high mannose) asparagine). N692 is a glycosylation site (N-linked (GlcNAc...) (high mannose) asparagine; alternate). An N-linked (GlcNAc...) (paucimannose) asparagine; alternate glycan is attached at N692. Residue N718 is glycosylated (N-linked (GlcNAc...) (high mannose) asparagine). A glycan (N-linked (GlcNAc...) asparagine) is linked at N746. Residue N936 is glycosylated (N-linked (GlcNAc...) (high mannose) asparagine). The N-linked (GlcNAc...) (paucimannose) asparagine glycan is linked to N970. N-linked (GlcNAc...) (complex) asparagine glycosylation is present at N1012. 3 N-linked (GlcNAc...) (high mannose) asparagine glycosylation sites follow: N1122, N1152, and N1171. The region spanning 1211–1274 is the LRRCT domain; the sequence is TDLNCDCDLG…DDLRETRCEN (64 aa).

Belongs to the chaoptin family. Expressed in photoreceptor cells and their axons in the adult retina, the ocellus and larval photoreceptor organ.

The protein localises to the cell membrane. In terms of biological role, required for photoreceptor cell morphogenesis. Mediates homophilic cellular adhesion. The sequence is that of Chaoptin (chp) from Drosophila melanogaster (Fruit fly).